The following is a 77-amino-acid chain: Large ribosomal subunit protein bL28 (77 aa).

Positions 1–21 are disordered; sequence MARVCKVTGKRPMTGNNVSHA.

Belongs to the bacterial ribosomal protein bL28 family.

The sequence is that of Large ribosomal subunit protein bL28 from Chromobacterium violaceum (strain ATCC 12472 / DSM 30191 / JCM 1249 / CCUG 213 / NBRC 12614 / NCIMB 9131 / NCTC 9757 / MK).